The primary structure comprises 213 residues: Glutathione S-transferase PARB (213 aa).

Residues 1-82 form the GST N-terminal domain; the sequence is MAIKVHGSPM…YIAHVYADNG (82 aa). Glutathione contacts are provided by residues Ser-11, 12-13, 40-41, 53-54, and 66-67; these read TA, HK, QV, and ES. The region spanning 89–213 is the GST C-terminal domain; the sequence is DPKKMPSMSV…WVKGLEKLQK (125 aa).

This sequence belongs to the GST superfamily. Phi family.

It catalyses the reaction RX + glutathione = an S-substituted glutathione + a halide anion + H(+). Conjugation of reduced glutathione to a wide number of exogenous and endogenous hydrophobic electrophiles. This Nicotiana tabacum (Common tobacco) protein is Glutathione S-transferase PARB.